We begin with the raw amino-acid sequence, 324 residues long: Ribose-phosphate pyrophosphokinase 1 (324 aa).

Residues 39-41 (DGE) and 98-99 (RQ) contribute to the ATP site. Mg(2+) is bound by residues His-132 and Asp-174. Residue Lys-197 is part of the active site. D-ribose 5-phosphate-binding positions include Arg-199, Asp-223, and 227-231 (DTAGT).

Belongs to the ribose-phosphate pyrophosphokinase family. Class I subfamily. Homohexamer. Mg(2+) is required as a cofactor.

Its subcellular location is the cytoplasm. It carries out the reaction D-ribose 5-phosphate + ATP = 5-phospho-alpha-D-ribose 1-diphosphate + AMP + H(+). It participates in metabolic intermediate biosynthesis; 5-phospho-alpha-D-ribose 1-diphosphate biosynthesis; 5-phospho-alpha-D-ribose 1-diphosphate from D-ribose 5-phosphate (route I): step 1/1. Its function is as follows. Involved in the biosynthesis of the central metabolite phospho-alpha-D-ribosyl-1-pyrophosphate (PRPP) via the transfer of pyrophosphoryl group from ATP to 1-hydroxyl of ribose-5-phosphate (Rib-5-P). The chain is Ribose-phosphate pyrophosphokinase 1 from Lactococcus lactis subsp. lactis (strain IL1403) (Streptococcus lactis).